A 221-amino-acid polypeptide reads, in one-letter code: Very-long-chain (3R)-3-hydroxyacyl-CoA dehydratase PASTICCINO 2 (221 aa).

Residues 1–11 lie on the Cytoplasmic side of the membrane; the sequence is MAGFLSVVRRV. Residues 12 to 32 form a helical membrane-spanning segment; it reads YLTLYNWIVFAGWAQVLYLAI. Over 33 to 51 the chain is Lumenal; that stretch reads TTLKETGYENVYDAIEKPL. Residues 52-70 traverse the membrane as a helical segment; that stretch reads QLAQTAAVLEILHGLVGLV. Residues 71–76 lie on the Cytoplasmic side of the membrane; sequence RSPVSA. A helical transmembrane segment spans residues 77–95; it reads TLPQIGSRLFLTWGILYSF. The Lumenal portion of the chain corresponds to 96–100; it reads PEVRS. A helical transmembrane segment spans residues 101-122; that stretch reads HFLVTSLVISWSITEIIRYSFF. Over 123–142 the chain is Cytoplasmic; the sequence is GFKEALGFAPSWHLWLRYSS. Residues 143 to 165 form a helical membrane-spanning segment; the sequence is FLLLYPTGITSEVGLIYLALPHI. Active-site residues include Y147 and E154. At 166–184 the chain is on the lumenal side; it reads KTSEMYSVRMPNILNFSFD. The chain crosses the membrane as a helical span at residues 185–204; that stretch reads FFYATILVLAIYVPGSPHMY. At 205–221 the chain is on the cytoplasmic side; that stretch reads RYMLGQRKRALSKSKRE.

This sequence belongs to the very long-chain fatty acids dehydratase HACD family. In terms of assembly, interacts with CDKA-1; but only with the 'Tyr-15' phosphorylated protein. Interacts with PAS1. Part of the fatty acid elongase complex which contains a beta-ketoacyl-CoA synthase (KCS), a beta-ketoacyl-CoA reductase (KCR), a beta-hydroxyacyl-CoA dehydratase (HCD) and an enoyl-CoA reductase (ECR). In terms of tissue distribution, high expression in young seedlings, roots, root tips, flowers and young siliques. Lower levels in leaves and stems.

Its subcellular location is the endoplasmic reticulum membrane. The protein resides in the cytoplasm. The protein localises to the nucleus. It catalyses the reaction a very-long-chain (3R)-3-hydroxyacyl-CoA = a very-long-chain (2E)-enoyl-CoA + H2O. It participates in lipid metabolism; fatty acid biosynthesis. In terms of biological role, catalyzes the third of the four reactions of the long-chain fatty acids elongation cycle. This endoplasmic reticulum-bound enzymatic process, allows the addition of two carbons to the chain of long- and very long-chain fatty acids/VLCFAs per cycle. This enzyme catalyzes the dehydration of the 3-hydroxyacyl-CoA intermediate into trans-2,3-enoyl-CoA, within each cycle of fatty acid elongation. Thereby, it participates in the production of VLCFAs of different chain lengths that are involved in multiple biological processes as precursors of membrane lipids and lipid mediators. May be an anti-phosphatase that prevents CDKA-1 dephosphorylation and activation. Involved in the hormonal control of cell division and differentiation. Required for proliferation control of meristematic and non-meristematic cells. Negative regulator of the cell cycle. The chain is Very-long-chain (3R)-3-hydroxyacyl-CoA dehydratase PASTICCINO 2 (PAS2) from Arabidopsis thaliana (Mouse-ear cress).